The sequence spans 80 residues: MKKPLRQQNRQIISYVPRTEPAPPEHAIKMDSFRDVWMLRGKYVAFVLMGESFLRSPAFTVPESAQRWANQIRQENEVEE.

This sequence belongs to the CedA family.

Functionally, activates the cell division inhibited by chromosomal DNA over-replication. This is Cell division activator CedA from Escherichia coli O1:K1 / APEC.